A 290-amino-acid chain; its full sequence is Endoplasmic reticulum-Golgi intermediate compartment protein 1 (290 aa).

The Cytoplasmic portion of the chain corresponds to 1-26; that stretch reads MPFDFRRFDIYRKVPKDLTQPTYTGA. A helical transmembrane segment spans residues 27–47; that stretch reads IISICCCLFILFLFLSELTGF. The Lumenal portion of the chain corresponds to 48 to 254; it reads ITTEVVNELY…RRQPLYRFIT (207 aa). The N-linked (GlcNAc...) asparagine glycan is linked to N74. A helical membrane pass occupies residues 255–275; the sequence is TICAIIGGTFTVAGILDSCIF. Over 276–290 the chain is Cytoplasmic; that stretch reads TASEAWKKIQLGKMH.

Belongs to the ERGIC family. As to quaternary structure, may form a heteromeric complex composed of ERGIC1, ERGIC2 and ERGIC3. Within the complex, the interaction with ERGIC3 is direct. Interacts with ERGIC3/ERV46. Post-translationally, N-glycosylated.

It is found in the endoplasmic reticulum membrane. Its subcellular location is the endoplasmic reticulum-Golgi intermediate compartment membrane. It localises to the golgi apparatus membrane. Possible role in transport between endoplasmic reticulum and Golgi. This is Endoplasmic reticulum-Golgi intermediate compartment protein 1 (ERGIC1) from Homo sapiens (Human).